Reading from the N-terminus, the 144-residue chain is Large ribosomal subunit protein uL13 (144 aa).

The protein belongs to the universal ribosomal protein uL13 family. Part of the 50S ribosomal subunit.

This protein is one of the early assembly proteins of the 50S ribosomal subunit, although it is not seen to bind rRNA by itself. It is important during the early stages of 50S assembly. In Nitratidesulfovibrio vulgaris (strain DSM 19637 / Miyazaki F) (Desulfovibrio vulgaris), this protein is Large ribosomal subunit protein uL13.